The primary structure comprises 337 residues: uncharacterized protein (337 aa).

The AFP-like domain maps to Ser279–Asp337.

This sequence to B.subtilis SpsE.

This is an uncharacterized protein from Methanocaldococcus jannaschii (strain ATCC 43067 / DSM 2661 / JAL-1 / JCM 10045 / NBRC 100440) (Methanococcus jannaschii).